Here is a 582-residue protein sequence, read N- to C-terminus: Formate--tetrahydrofolate ligase (582 aa).

Position 65–72 (65–72 (TPLGEGKT)) interacts with ATP.

The protein belongs to the formate--tetrahydrofolate ligase family.

The enzyme catalyses (6S)-5,6,7,8-tetrahydrofolate + formate + ATP = (6R)-10-formyltetrahydrofolate + ADP + phosphate. The protein operates within one-carbon metabolism; tetrahydrofolate interconversion. The polypeptide is Formate--tetrahydrofolate ligase (Vibrio vulnificus (strain CMCP6)).